The chain runs to 597 residues: MSKVRIYTLAKDLGVDNHKMLEILDGLGVSYKSVSSTIDEENVEIIKQILADEAAEGGDAAPAAASAPAAATAEPEEADETPAAAAQADAEPASDLPHRAPVVTIMGHVDHGKTSLLDYIRKTRVAAKEAGGITQHVGAFEAKTSKGKIVFIDTPGHEAFTTIRARGANVADIAIIVIAADDSLMPQTREAIAHAQAAKVPMLIAINKVDLPQADPEKVKTDLTQLNLVPEEYGGDVIVVPVSAKTGEGVEDLLEYISLTAELEDLRADPKGQFSGVIIEGRVDKQAGVLATVMVQEGTLHVGDFLVVGENYGKIKAMTDSNGGRIKEAGPSTPVQILGFSEVPSSGETVVSAKNEHAAREIVAQRASDRRDEEDARERRKAQRSLADLLGPLGEVHTVNLILRADTQGSLEAIQGILARKETEDVKLNVMLAGIGAPTEGDVLLASTAEAQILCFNVTPSAAVTKVAETKEIPIKAYRIIYEMIDEVDRLIKGNLDPVFEEQYLGRAEVRMVIHHPKSGNIAGSYVTDGMFKRNAKAKVTRGKEVVYEGTVVGLKRFKDDVREVQQGYECGINIDWNDVQEGDIIEASEMVEVEPR.

Composition is skewed to low complexity over residues 57-73 and 81-95; these read GGDAAPAAASAPAAATA and TPAAAAQADAEPASD. A disordered region spans residues 57–96; that stretch reads GGDAAPAAASAPAAATAEPEEADETPAAAAQADAEPASDL. Residues 98–271 enclose the tr-type G domain; sequence HRAPVVTIMG…ELEDLRADPK (174 aa). The G1 stretch occupies residues 107-114; it reads GHVDHGKT. 107-114 contacts GTP; that stretch reads GHVDHGKT. The segment at 132–136 is G2; it reads GITQH. Residues 153 to 156 form a G3 region; it reads DTPG. GTP-binding positions include 153–157 and 207–210; these read DTPGH and NKVD. Residues 207–210 form a G4 region; it reads NKVD. Residues 243–245 form a G5 region; it reads SAK.

It belongs to the TRAFAC class translation factor GTPase superfamily. Classic translation factor GTPase family. IF-2 subfamily.

The protein localises to the cytoplasm. Its function is as follows. One of the essential components for the initiation of protein synthesis. Protects formylmethionyl-tRNA from spontaneous hydrolysis and promotes its binding to the 30S ribosomal subunits. Also involved in the hydrolysis of GTP during the formation of the 70S ribosomal complex. The chain is Translation initiation factor IF-2 from Deinococcus radiodurans (strain ATCC 13939 / DSM 20539 / JCM 16871 / CCUG 27074 / LMG 4051 / NBRC 15346 / NCIMB 9279 / VKM B-1422 / R1).